We begin with the raw amino-acid sequence, 68 residues long: Elastase inhibitor AFLEI (68 aa).

Residues Cys5 and Cys67 are joined by a disulfide bond.

The protein resides in the secreted. In terms of biological role, elastase inhibitor. Inhibitor of A.flavus elastase with a Ki of 40 nM. Inhibitor of A.fumigatus elastase and human leukocyte elastase. Inhibits the fibrinogenase and collagenase activities of A.flavus elastase. Does not inhibit porcine pancreatic elastase, trypsin, chymotrypsin, thrombin or A.acutus AC1-proteinase. The protein is Elastase inhibitor AFLEI of Aspergillus flavus.